Consider the following 331-residue polypeptide: Ferrochelatase (331 aa).

Positions 187 and 286 each coordinate Fe cation.

This sequence belongs to the ferrochelatase family.

The protein resides in the cytoplasm. It carries out the reaction heme b + 2 H(+) = protoporphyrin IX + Fe(2+). It functions in the pathway porphyrin-containing compound metabolism; protoheme biosynthesis; protoheme from protoporphyrin-IX: step 1/1. Its function is as follows. Catalyzes the ferrous insertion into protoporphyrin IX. This Legionella pneumophila (strain Lens) protein is Ferrochelatase.